We begin with the raw amino-acid sequence, 321 residues long: Lipoyl synthase (321 aa).

[4Fe-4S] cluster contacts are provided by Cys68, Cys73, Cys79, Cys94, Cys98, Cys101, and Ser308. Positions 80–297 (FNHGTATFMI…KDYAEEIGFT (218 aa)) constitute a Radical SAM core domain.

This sequence belongs to the radical SAM superfamily. Lipoyl synthase family. It depends on [4Fe-4S] cluster as a cofactor.

The protein localises to the cytoplasm. The catalysed reaction is [[Fe-S] cluster scaffold protein carrying a second [4Fe-4S](2+) cluster] + N(6)-octanoyl-L-lysyl-[protein] + 2 oxidized [2Fe-2S]-[ferredoxin] + 2 S-adenosyl-L-methionine + 4 H(+) = [[Fe-S] cluster scaffold protein] + N(6)-[(R)-dihydrolipoyl]-L-lysyl-[protein] + 4 Fe(3+) + 2 hydrogen sulfide + 2 5'-deoxyadenosine + 2 L-methionine + 2 reduced [2Fe-2S]-[ferredoxin]. It functions in the pathway protein modification; protein lipoylation via endogenous pathway; protein N(6)-(lipoyl)lysine from octanoyl-[acyl-carrier-protein]: step 2/2. Catalyzes the radical-mediated insertion of two sulfur atoms into the C-6 and C-8 positions of the octanoyl moiety bound to the lipoyl domains of lipoate-dependent enzymes, thereby converting the octanoylated domains into lipoylated derivatives. The polypeptide is Lipoyl synthase (Shewanella loihica (strain ATCC BAA-1088 / PV-4)).